The chain runs to 148 residues: HTH-type transcriptional regulator SarZ (148 aa).

One can recognise an HTH marR-type domain in the interval 9-139; the sequence is SKQLCFLFYV…IINNLRNFVS (131 aa). A DNA-binding region (H-T-H motif) is located at residues 55–78; that stretch reads IKKLGERVFLDSGTLTPLLKKLEK.

Belongs to the SarZ family.

Its subcellular location is the cytoplasm. In terms of biological role, activates transcription of virulence factors alpha- and beta hemolysin genes (hla and hlb). Also, activates RNAIII expression, a central regulator transcribed from the agr locus. This is HTH-type transcriptional regulator SarZ (sarZ) from Staphylococcus aureus (strain USA300).